Here is a 204-residue protein sequence, read N- to C-terminus: ADP-ribosylation factor-like protein 15 (204 aa).

GTP-binding positions include 39–46 (GLTGSGKT), 82–86 (ELGGA), and 142–145 (NHQD).

The protein belongs to the small GTPase superfamily. Arf family.

The polypeptide is ADP-ribosylation factor-like protein 15 (Arl15) (Mus musculus (Mouse)).